Reading from the N-terminus, the 338-residue chain is Large ribosomal subunit protein uL3 (338 aa).

Residues 230-253 form a disordered region; that stretch reads HRKGHRRTGTIGPQAPALMFTQPR.

It belongs to the universal ribosomal protein uL3 family. Part of the 50S ribosomal subunit. Forms a cluster with proteins L14 and L24e.

Functionally, one of the primary rRNA binding proteins, it binds directly near the 3'-end of the 23S rRNA, where it nucleates assembly of the 50S subunit. The chain is Large ribosomal subunit protein uL3 from Pyrobaculum neutrophilum (strain DSM 2338 / JCM 9278 / NBRC 100436 / V24Sta) (Thermoproteus neutrophilus).